The following is a 110-amino-acid chain: Large ribosomal subunit protein uL22 (110 aa).

Over residues 85–95 the composition is skewed to basic residues; the sequence is RGTASKIRKPT. Positions 85 to 110 are disordered; that stretch reads RGTASKIRKPTSHVMVEVSKAQKKEA.

It belongs to the universal ribosomal protein uL22 family. As to quaternary structure, part of the 50S ribosomal subunit.

This protein binds specifically to 23S rRNA; its binding is stimulated by other ribosomal proteins, e.g. L4, L17, and L20. It is important during the early stages of 50S assembly. It makes multiple contacts with different domains of the 23S rRNA in the assembled 50S subunit and ribosome. Its function is as follows. The globular domain of the protein is located near the polypeptide exit tunnel on the outside of the subunit, while an extended beta-hairpin is found that lines the wall of the exit tunnel in the center of the 70S ribosome. This is Large ribosomal subunit protein uL22 from Campylobacter curvus (strain 525.92).